The chain runs to 166 residues: Probable chemoreceptor glutamine deamidase CheD (166 aa).

This sequence belongs to the CheD family.

The catalysed reaction is L-glutaminyl-[protein] + H2O = L-glutamyl-[protein] + NH4(+). In terms of biological role, probably deamidates glutamine residues to glutamate on methyl-accepting chemotaxis receptors (MCPs), playing an important role in chemotaxis. In Clostridium acetobutylicum (strain ATCC 824 / DSM 792 / JCM 1419 / IAM 19013 / LMG 5710 / NBRC 13948 / NRRL B-527 / VKM B-1787 / 2291 / W), this protein is Probable chemoreceptor glutamine deamidase CheD.